We begin with the raw amino-acid sequence, 142 residues long: DNA-directed RNA polymerase II subunit RPB4 (142 aa).

It belongs to the eukaryotic RPB4 RNA polymerase subunit family. Component of the RNA polymerase II (Pol II) core complex consisting of 12 subunits: a ten-subunit catalytic core composed of POLR2A/RPB1, POLR2B/RPB2, POLR2C/RPB3, POLR2I/RPB9, POLR2J/RPB11, POLR2E/RPABC1, POLR2F/RPABC2, POLR2H/RPABC3, POLR2K/RPABC4 and POLR2L/RPABC5 and a mobile stalk composed of two subunits POLR2D/RPB4 and POLR2G/RPB7, protruding from the core and functioning primarily in transcription initiation. Part of Pol II(G) complex, in which Pol II core associates with an additional subunit POLR2M; unlike conventional Pol II, Pol II(G) functions as a transcriptional repressor. Part of TBP-based Pol II pre-initiation complex (PIC), in which Pol II core assembles with general transcription factors and other specific initiation factors including GTF2E1, GTF2E2, GTF2F1, GTF2F2, TCEA1, ERCC2, ERCC3, GTF2H2, GTF2H3, GTF2H4, GTF2H5, GTF2A1, GTF2A2, GTF2B and TBP; this large multi-subunit PIC complex mediates DNA unwinding and targets Pol II core to the transcription start site where the first phosphodiester bond forms.

It is found in the nucleus. Core component of RNA polymerase II (Pol II), a DNA-dependent RNA polymerase which synthesizes mRNA precursors and many functional non-coding RNAs using the four ribonucleoside triphosphates as substrates. Pol II is the central component of the basal RNA polymerase II transcription machinery. It is composed of mobile elements that move relative to each other. POLR2D/RPB4 is part of a subcomplex with POLR2G/RPB7 that binds to a pocket formed by POLR2A/RPB1, POLR2B/RPB2 and POLR2F/RPABC2 at the base of the clamp element. The POLR2D/RPB4-POLR2G/RPB7 subcomplex seems to lock the clamp via POLR2G/RPB7 in the closed conformation thus preventing double-stranded DNA to enter the active site cleft. The POLR2D/RPB4-POLR2G/RPB7 subcomplex binds single-stranded DNA and RNA. This chain is DNA-directed RNA polymerase II subunit RPB4 (POLR2D), found in Homo sapiens (Human).